The following is a 402-amino-acid chain: Probable peptidoglycan glycosyltransferase FtsW (402 aa).

Topologically, residues 1-24 (MLYRLKLLLSGQNTKKERVRAKLE) are cytoplasmic. The helical transmembrane segment at 25–45 (IDISIVFVMLGLLIFGWVMVT) threads the bilayer. Topologically, residues 46 to 63 (SASMVVALDDYNNPYFYS) are periplasmic. A helical membrane pass occupies residues 64–84 (IRQGFFAVIAIFLFLLALLVP). The Cytoplasmic segment spans residues 85-91 (TKNYEKN). The helical transmembrane segment at 92–112 (YNAFFFIMLIVLVAVLVPGVG) threads the bilayer. Over 113-121 (KSVNGARRW) the chain is Periplasmic. A helical membrane pass occupies residues 122–142 (IPLIIINIQVAELAKLLAIIF). The Cytoplasmic portion of the chain corresponds to 143-160 (FSGYIAENLPKMTNFKEG). The next 2 membrane-spanning stretches (helical) occupy residues 161–181 (ILTP…QPDF) and 182–202 (GSTV…GNKV). Position 203 (Arg203) is a topological domain, cytoplasmic. Residues 204–224 (WYGLLIGAMLIMATMLVIISP) traverse the membrane as a helical segment. Topologically, residues 225–284 (YRMHRITGFLHPWENANGSGYQLVQALIGFGRGGWFGDGLGNGVQKQFFLPEAHTDFITS) are periplasmic. A helical transmembrane segment spans residues 285 to 305 (VIAEEIGVIGLMILLMVYLFI). The Cytoplasmic segment spans residues 306–324 (VFRAMNIAKMAFELKRYYQ). Residues 325-345 (AFLSYGISFWIGFQVFVNIGV) form a helical membrane-spanning segment. The Periplasmic portion of the chain corresponds to 346–357 (NTGLLPTKGLTL). Residues 358 to 378 (PLISYGGSSLLIMCFTLGILV) traverse the membrane as a helical segment. At 379 to 402 (RVDFENKLLADTINPKYIYKKVRK) the chain is on the cytoplasmic side.

It belongs to the SEDS family. FtsW subfamily.

The protein localises to the cell inner membrane. It catalyses the reaction [GlcNAc-(1-&gt;4)-Mur2Ac(oyl-L-Ala-gamma-D-Glu-L-Lys-D-Ala-D-Ala)](n)-di-trans,octa-cis-undecaprenyl diphosphate + beta-D-GlcNAc-(1-&gt;4)-Mur2Ac(oyl-L-Ala-gamma-D-Glu-L-Lys-D-Ala-D-Ala)-di-trans,octa-cis-undecaprenyl diphosphate = [GlcNAc-(1-&gt;4)-Mur2Ac(oyl-L-Ala-gamma-D-Glu-L-Lys-D-Ala-D-Ala)](n+1)-di-trans,octa-cis-undecaprenyl diphosphate + di-trans,octa-cis-undecaprenyl diphosphate + H(+). It participates in cell wall biogenesis; peptidoglycan biosynthesis. Its function is as follows. Peptidoglycan polymerase that is essential for cell division. This Francisella salina protein is Probable peptidoglycan glycosyltransferase FtsW.